The following is a 187-amino-acid chain: Large ribosomal subunit protein uL10 (187 aa).

It belongs to the universal ribosomal protein uL10 family. In terms of assembly, part of the ribosomal stalk of the 50S ribosomal subunit. The N-terminus interacts with L11 and the large rRNA to form the base of the stalk. The C-terminus forms an elongated spine to which L12 dimers bind in a sequential fashion forming a multimeric L10(L12)X complex.

In terms of biological role, forms part of the ribosomal stalk, playing a central role in the interaction of the ribosome with GTP-bound translation factors. The polypeptide is Large ribosomal subunit protein uL10 (Synechococcus sp. (strain JA-2-3B'a(2-13)) (Cyanobacteria bacterium Yellowstone B-Prime)).